The chain runs to 130 residues: Small ribosomal subunit protein uS11c (130 aa).

Belongs to the universal ribosomal protein uS11 family. As to quaternary structure, part of the 30S ribosomal subunit.

Its subcellular location is the plastid. The protein localises to the chloroplast. The polypeptide is Small ribosomal subunit protein uS11c (Porphyra purpurea (Red seaweed)).